A 624-amino-acid polypeptide reads, in one-letter code: MWVALGMLWLLALGGPHQAWGFCPSECSCSLRILSDGSKARTVVCSDPDLTLPPASIPPDTCKLRLERTAIRRVPGETFRPLSRLEQLWLPYNALSELSALMLRGLRRLRELRLPGNRLVTFPWAALRDTPQLQLLDLQANRLSTLPPEAAHFLENLTFLDLSNNQLMRLPEELLDVWAHLKTGPFLSGHHARLILGLQDNPWVCDCRLYDLVHLLDGWVSSNLIFIEARLRCASPRSLAGVAFSQLELRKCQSPELRPGVTSIISPLGSTVLLRCGATGIPGPEMSWRRANGRPLNGTVHQEVSSDGSSWTLLDLPVVSLFDSGDYICQAKNFLGASETLISLIVTEPQTSTGYSGIPGVLWARTGEGAEAAAYNNKLVARHVPHMPEHVALATKPSMPSIKEELALQNFQMDVPGEFSREPSEHQEAQMVRSLKVVGDTYHSVSLVWKAPQAGNTTAFSVLYAVFGHRDMRRMTVEPGKTSVTIEGLAPKTKYVACVCVRGLVPTKEQCVIFSTDEVVDAEGTQRLINMVVISVAAIIALPPTLLVCCGALRRRCHKCRTGGSAEASGAYVNLERLGHSEDSSEVLSRSSLSEGDRLLSARSSLDSQVLGVRGGRRINEYFC.

The first 21 residues, 1-21 (MWVALGMLWLLALGGPHQAWG), serve as a signal peptide directing secretion. Positions 22–59 (FCPSECSCSLRILSDGSKARTVVCSDPDLTLPPASIPP) constitute an LRRNT domain. Residues 22–527 (FCPSECSCSL…EVVDAEGTQR (506 aa)) are Lumenal-facing. LRR repeat units follow at residues 60 to 81 (DTCKLRLERTAIRRVPGETFRP), 84 to 105 (RLEQLWLPYNALSELSALMLRG), 108 to 129 (RLRELRLPGNRLVTFPWAALRD), 132 to 153 (QLQLLDLQANRLSTLPPEAAHF), and 156 to 177 (NLTFLDLSNNQLMRLPEELLDV). N-linked (GlcNAc...) asparagine glycosylation occurs at Asn-156. The 54-residue stretch at 201–254 (NPWVCDCRLYDLVHLLDGWVSSNLIFIEARLRCASPRSLAGVAFSQLELRKCQS) folds into the LRRCT domain. Positions 267–336 (PLGSTVLLRC…YICQAKNFLG (70 aa)) constitute an Ig-like C2-type domain. Residues Cys-276 and Cys-329 are joined by a disulfide bond. Residues Asn-297 and Asn-456 are each glycosylated (N-linked (GlcNAc...) asparagine). Residues 431–519 (MVRSLKVVGD…QCVIFSTDEV (89 aa)) form the Fibronectin type-III domain. The stretch at 526–549 (QRLINMVVISVAAIIALPPTLLVC) is one LRR 6 repeat. Residues 528–548 (LINMVVISVAAIIALPPTLLV) form a helical membrane-spanning segment. The Cytoplasmic portion of the chain corresponds to 549–624 (CCGALRRRCH…GGRRINEYFC (76 aa)).

As to quaternary structure, may form a homodimer. Interacts with LRIT2; may form a heterodimer with LRIT2. Interacts (via its N-terminal extracellular domain) with metabotropic glutamate receptor GRM6. Interacts (via its extreme C-terminus) with the scaffold protein FRMPD2 (via the third PDZ domain); the interaction leads to their colocalization in photoreceptor synapses. Expressed predominantly in developing photoreceptor and bipolar cells.

The protein resides in the endoplasmic reticulum membrane. It localises to the cell projection. It is found in the dendrite. Photoreceptor synaptic protein essential for normal vision. Involved in synapse formation in cone photoreceptor cells. This chain is Leucine-rich repeat, immunoglobulin-like domain and transmembrane domain-containing protein 1 (Lrit1), found in Mus musculus (Mouse).